A 141-amino-acid chain; its full sequence is Endoribonuclease YbeY (141 aa).

Residues His107, His111, and His117 each coordinate Zn(2+).

This sequence belongs to the endoribonuclease YbeY family. Zn(2+) serves as cofactor.

The protein resides in the cytoplasm. Single strand-specific metallo-endoribonuclease involved in late-stage 70S ribosome quality control and in maturation of the 3' terminus of the 16S rRNA. The sequence is that of Endoribonuclease YbeY from Leptospira interrogans serogroup Icterohaemorrhagiae serovar Lai (strain 56601).